The sequence spans 311 residues: Pyrimidine-specific ribonucleoside hydrolase RihA (311 aa).

His240 is an active-site residue.

This sequence belongs to the IUNH family. RihA subfamily.

Hydrolyzes cytidine or uridine to ribose and cytosine or uracil, respectively. The sequence is that of Pyrimidine-specific ribonucleoside hydrolase RihA from Salmonella choleraesuis (strain SC-B67).